The following is a 109-amino-acid chain: ATP-dependent Clp protease adapter protein ClpS (109 aa).

Belongs to the ClpS family. As to quaternary structure, binds to the N-terminal domain of the chaperone ClpA.

Functionally, involved in the modulation of the specificity of the ClpAP-mediated ATP-dependent protein degradation. The sequence is that of ATP-dependent Clp protease adapter protein ClpS from Lawsonia intracellularis (strain PHE/MN1-00).